We begin with the raw amino-acid sequence, 399 residues long: Methylthioribose kinase (399 aa).

ATP contacts are provided by residues Asn40, Lys57, and 111 to 113 (EDL). Substrate is bound at residue Asp229. 246-248 (DAE) contributes to the ATP binding site. Arg344 is a substrate binding site.

This sequence belongs to the methylthioribose kinase family. Homodimer.

It carries out the reaction 5-(methylsulfanyl)-D-ribose + ATP = 5-(methylsulfanyl)-alpha-D-ribose 1-phosphate + ADP + H(+). The protein operates within amino-acid biosynthesis; L-methionine biosynthesis via salvage pathway; S-methyl-5-thio-alpha-D-ribose 1-phosphate from S-methyl-5'-thioadenosine (hydrolase route): step 2/2. Catalyzes the phosphorylation of methylthioribose into methylthioribose-1-phosphate. The protein is Methylthioribose kinase of Enterobacter sp. (strain 638).